A 428-amino-acid chain; its full sequence is Nucleotidyltransferase MB21D2 (428 aa).

The interval 366-389 (QRRGSTTSIPSPQSDGGDPNQPDD) is disordered. The segment covering 368-379 (RGSTTSIPSPQS) has biased composition (polar residues). Residue threonine 372 is modified to Phosphothreonine. 3 positions are modified to phosphoserine: serine 373, serine 376, and serine 379.

It belongs to the mab-21 family.

In terms of biological role, probable nucleotidyltransferase that catalyzes the formation of cyclic dinucleotide second messenger in response to some unknown stimulus. The sequence is that of Nucleotidyltransferase MB21D2 from Mus musculus (Mouse).